The primary structure comprises 249 residues: DNA repair protein RecO (249 aa).

This sequence belongs to the RecO family.

Involved in DNA repair and RecF pathway recombination. The chain is DNA repair protein RecO from Exiguobacterium sp. (strain ATCC BAA-1283 / AT1b).